We begin with the raw amino-acid sequence, 211 residues long: Metalloproteinase inhibitor 3 (211 aa).

The first 23 residues, 1–23, serve as a signal peptide directing secretion; it reads MTPWLGLVVLLSCWSLGHWGAEA. A Zn(2+)-binding site is contributed by cysteine 24. Involved in metalloproteinase-binding stretches follow at residues 24–27 and 88–89; these read CTCS and ES. 6 disulfides stabilise this stretch: cysteine 24–cysteine 91, cysteine 26–cysteine 118, cysteine 36–cysteine 143, cysteine 145–cysteine 192, cysteine 150–cysteine 155, and cysteine 163–cysteine 184. The 120-residue stretch at 24 to 143 folds into the NTR domain; that stretch reads CTCSPSHPQD…GLNYRYHLGC (120 aa). A mediates interaction with EFEMP1 region spans residues 105–188; the sequence is TGRVYEGKMY…SKHYACIRQK (84 aa).

Belongs to the protease inhibitor I35 (TIMP) family. Interacts with EFEMP1. Interacts with KDR. Highest levels are found in kidney, lung and brain followed by ovary and uterus. Low levels are found in bone.

It is found in the secreted. The protein localises to the extracellular space. It localises to the extracellular matrix. In terms of biological role, mediates a variety of processes including matrix regulation and turnover, inflammation, and angiogenesis, through reversible inhibition of zinc protease superfamily enzymes, primarily matrix metalloproteinases (MMPs). Regulates extracellular matrix (ECM) remodeling through inhibition of matrix metalloproteinases (MMP) including MMP-1, MMP-2, MMP-3, MMP-7, MMP-9, MMP-13, MMP-14 and MMP-15. Additionally, modulates the processing of amyloid precursor protein (APP) and apolipoprotein E receptor ApoER2 by inhibiting two alpha-secretases ADAM10 and ADAM17. Functions as a tumor suppressor and a potent inhibitor of angiogenesis. Exerts its anti-angiogenic effect by directly interacting with vascular endothelial growth factor (VEGF) receptor-2/KDR, preventing its binding to the VEGFA ligand. Selectively induces apoptosis in angiogenic endothelial cells through a caspase-independent cell death pathway. Mechanistically, inhibits matrix-induced focal adhesion kinase PTK2 tyrosine phosphorylation and association with paxillin/PXN and disrupts the incorporation of ITGB3, PTK2 and PXN into focal adhesion contacts on the matrix. The polypeptide is Metalloproteinase inhibitor 3 (Timp3) (Mus musculus (Mouse)).